Here is a 626-residue protein sequence, read N- to C-terminus: PEX5-related protein (626 aa).

3 disordered regions span residues 1 to 20 (MYQG…LSSD), 118 to 167 (VSQT…SSLD), and 181 to 235 (KFHG…ASEL). Residues 181–198 (KFHGDRNTKGHPMAERKS) are compositionally biased toward basic and acidic residues. Ser-205 is modified (phosphoserine). The segment covering 225–235 (SALNSESASEL) has biased composition (low complexity). Phosphoserine occurs at positions 253, 257, and 261. TPR repeat units lie at residues 326–359 (WPGA…DPGD), 360–393 (AEAW…QPNN), and 395–427 (KALM…NPKY). A phosphoserine mark is found at Ser-445 and Ser-447. 3 TPR repeats span residues 474 to 507 (PDLQ…RPED), 509 to 541 (SLWN…QPGF), and 543 to 575 (RSRY…QRKS).

This sequence belongs to the peroxisomal targeting signal receptor family. As to quaternary structure, interacts with RAB8B. Forms an obligate 4:4 complex with HCN2. May interact with the C-terminal PTS1-type tripeptide peroxisomal targeting signal (SKL-type); the relevance of such interaction is however unclear. Interacts with HCN3. Interacts with HCN4 with a 4:4 HCN4:PEX5L stoichiometry; reduces the effects of cAMP on the voltage-dependence and rate of activation of HCN4. Mainly expressed in brain. Also expressed in pancreas, testis and pituitary.

It is found in the cytoplasm. The protein localises to the membrane. Accessory subunit of hyperpolarization-activated cyclic nucleotide-gated (HCN) channels, regulating their cell-surface expression and cyclic nucleotide dependence. The protein is PEX5-related protein (PEX5L) of Homo sapiens (Human).